Consider the following 319-residue polypeptide: Putative peptide permease protein BOV_A0351 (319 aa).

The next 6 membrane-spanning stretches (helical) occupy residues 9–29 (LLIG…LLQL), 102–122 (LLLM…TGII), 138–158 (LALL…LYVF), 182–202 (LLRH…ALIM), 242–262 (LPVV…AIFI), and 284–304 (YPVI…VNIL). Residues 98–305 (IGPTLLLMAA…ACVIIVNILT (208 aa)) enclose the ABC transmembrane type-1 domain.

It belongs to the binding-protein-dependent transport system permease family. In terms of assembly, the complex is composed of two ATP-binding proteins (BOV_A0347 and BOV_A0348), two transmembrane proteins (BOV_A0350 and BOV_A0351) and a solute-binding protein (BOV_A0352).

It localises to the cell inner membrane. Probably part of an ABC transporter complex that could be involved in peptide import. Probably responsible for the translocation of the substrate across the membrane. In Brucella ovis (strain ATCC 25840 / 63/290 / NCTC 10512), this protein is Putative peptide permease protein BOV_A0351.